The sequence spans 692 residues: MELIFQNVWFVPLFPFLASILLGIGLFFFPNSIKKFRRLSSFISIMFLNIAMLLSFHFFWQQITGSPIHRYLWSWVLYKNFVLEIGYLLDPLTSIMLVLVTTVAVMVMIYSDSYMFYDEGYIKFFCYLSLFTASMLGLVLSPNLIQVYIFWELVGMCSYLLIGFWFTRPSAANACQKAFVTNRIGDFGLLLGILGFYWITGSFDFQQLSKRFFELLSYNQINLVFATLCALFLFLGPVAKSAQFPLHIWLPDAMEGPTPISALIHAATMVAAGIFLVARMFPLFQMLPFVMSIISWTGAITALLGATIALAQKDLKKGLAYSTMSQLGYMMLALGIGSYKAGLFHLITHAYSKALLFLGSGSVIHSMEPIVGYHPNKSQNMIFMGGLRQYMPITAITFLFGTLSLCGIPPFACFWSKDEILVNSWLHFPILGSIAFFTAGLTAFYMFRIYFLTFEGDFRGHFFDDVKKLSSISIWGSLEFNKEQFKLDKKSTLYPKEANNIMLFPLIILTIPTVFIGFIGILFDENKMNVDSLSYWLTLSINSFNYSNSEKFLEFLFNAIPSVSIAFFGILIAFYLYGPNFSFLKKEKKKLQLKSEIDIVLKSFSNFIYNWSYYRAYIDGFYSSFFIKGLRFLIKIVSFIDRWIIDGIINGIGIFSFFGGESLKYIEGGRISSYLFFIIFCMFLFFLYSYII.

A run of 17 helical transmembrane segments spans residues 9-29 (WFVPLFPFLASILLGIGLFFF), 39-59 (LSSFISIMFLNIAMLLSFHFF), 89-109 (LDPLTSIMLVLVTTVAVMVMI), 120-140 (GYIKFFCYLSLFTASMLGLVL), 147-167 (VYIFWELVGMCSYLLIGFWFT), 184-204 (IGDFGLLLGILGFYWITGSFD), 219-239 (NQINLVFATLCALFLFLGPVA), 258-278 (TPISALIHAATMVAAGIFLVA), 289-309 (FVMSIISWTGAITALLGATIA), 327-347 (LGYMMLALGIGSYKAGLFHLI), 354-374 (ALLFLGSGSVIHSMEPIVGYH), 395-415 (AITFLFGTLSLCGIPPFACFW), 425-445 (WLHFPILGSIAFFTAGLTAFY), 503-523 (LFPLIILTIPTVFIGFIGILF), 555-575 (FLFNAIPSVSIAFFGILIAFY), 643-663 (WIIDGIINGIGIFSFFGGESL), and 671-691 (ISSYLFFIIFCMFLFFLYSYI).

It belongs to the complex I subunit 5 family. As to quaternary structure, NDH is composed of at least 16 different subunits, 5 of which are encoded in the nucleus.

It is found in the plastid. It localises to the chloroplast thylakoid membrane. The catalysed reaction is a plastoquinone + NADH + (n+1) H(+)(in) = a plastoquinol + NAD(+) + n H(+)(out). It carries out the reaction a plastoquinone + NADPH + (n+1) H(+)(in) = a plastoquinol + NADP(+) + n H(+)(out). Its function is as follows. NDH shuttles electrons from NAD(P)H:plastoquinone, via FMN and iron-sulfur (Fe-S) centers, to quinones in the photosynthetic chain and possibly in a chloroplast respiratory chain. The immediate electron acceptor for the enzyme in this species is believed to be plastoquinone. Couples the redox reaction to proton translocation, and thus conserves the redox energy in a proton gradient. This chain is NAD(P)H-quinone oxidoreductase subunit 5, chloroplastic (ndhF), found in Marchantia polymorpha (Common liverwort).